The primary structure comprises 449 residues: UDP-N-acetylmuramoylalanine--D-glutamate ligase (449 aa).

113–119 (GTNGKTT) serves as a coordination point for ATP.

It belongs to the MurCDEF family.

The protein localises to the cytoplasm. It carries out the reaction UDP-N-acetyl-alpha-D-muramoyl-L-alanine + D-glutamate + ATP = UDP-N-acetyl-alpha-D-muramoyl-L-alanyl-D-glutamate + ADP + phosphate + H(+). It participates in cell wall biogenesis; peptidoglycan biosynthesis. In terms of biological role, cell wall formation. Catalyzes the addition of glutamate to the nucleotide precursor UDP-N-acetylmuramoyl-L-alanine (UMA). This Microcystis aeruginosa (strain NIES-843 / IAM M-2473) protein is UDP-N-acetylmuramoylalanine--D-glutamate ligase.